We begin with the raw amino-acid sequence, 339 residues long: Lipoate--protein ligase (339 aa).

A BPL/LPL catalytic domain is found at 31–221 (FLDDDILFPY…QLLQIETISQ (191 aa)). ATP is bound by residues arginine 73, 78–81 (GAVY), lysine 135, and alanine 139. Position 135 (lysine 135) interacts with (R)-lipoate.

This sequence belongs to the LplA family.

It catalyses the reaction L-lysyl-[lipoyl-carrier protein] + (R)-lipoate + ATP = N(6)-[(R)-lipoyl]-L-lysyl-[lipoyl-carrier protein] + AMP + diphosphate + H(+). The protein operates within protein modification; protein lipoylation via exogenous pathway; protein N(6)-(lipoyl)lysine from lipoate: step 1/2. It functions in the pathway protein modification; protein lipoylation via exogenous pathway; protein N(6)-(lipoyl)lysine from lipoate: step 2/2. Its function is as follows. Catalyzes specifically the lipoylation of GcvH-L (SpyM50867), likely via the ATP-dependent activation of lipoate to lipoyl-AMP and the transfer of the activated lipoyl onto the lipoyl domain of the target protein. This is Lipoate--protein ligase from Streptococcus pyogenes serotype M5 (strain Manfredo).